We begin with the raw amino-acid sequence, 166 residues long: NAD(P)H-quinone oxidoreductase subunit I, chloroplastic (166 aa).

2 4Fe-4S ferredoxin-type domains span residues glycine 55–lysine 84 and leucine 95–glutamate 124. Positions 64, 67, 70, 74, 104, 107, 110, and 114 each coordinate [4Fe-4S] cluster.

The protein belongs to the complex I 23 kDa subunit family. As to quaternary structure, NDH is composed of at least 16 different subunits, 5 of which are encoded in the nucleus. [4Fe-4S] cluster serves as cofactor.

It localises to the plastid. The protein resides in the chloroplast thylakoid membrane. The enzyme catalyses a plastoquinone + NADH + (n+1) H(+)(in) = a plastoquinol + NAD(+) + n H(+)(out). It carries out the reaction a plastoquinone + NADPH + (n+1) H(+)(in) = a plastoquinol + NADP(+) + n H(+)(out). Its function is as follows. NDH shuttles electrons from NAD(P)H:plastoquinone, via FMN and iron-sulfur (Fe-S) centers, to quinones in the photosynthetic chain and possibly in a chloroplast respiratory chain. The immediate electron acceptor for the enzyme in this species is believed to be plastoquinone. Couples the redox reaction to proton translocation, and thus conserves the redox energy in a proton gradient. The protein is NAD(P)H-quinone oxidoreductase subunit I, chloroplastic of Encelia californica (Bush sunflower).